The chain runs to 61 residues: Small ribosomal subunit protein uS14 (61 aa).

C24, C27, C40, and C43 together coordinate Zn(2+).

This sequence belongs to the universal ribosomal protein uS14 family. Zinc-binding uS14 subfamily. Part of the 30S ribosomal subunit. Contacts proteins S3 and S10. Zn(2+) serves as cofactor.

Functionally, binds 16S rRNA, required for the assembly of 30S particles and may also be responsible for determining the conformation of the 16S rRNA at the A site. In Nautilia profundicola (strain ATCC BAA-1463 / DSM 18972 / AmH), this protein is Small ribosomal subunit protein uS14.